We begin with the raw amino-acid sequence, 305 residues long: tRNA dimethylallyltransferase 1 (305 aa).

Position 10-17 (10-17 (GPTASGKS)) interacts with ATP. Residue 12–17 (TASGKS) participates in substrate binding. The segment at 35–38 (DSLT) is interaction with substrate tRNA.

This sequence belongs to the IPP transferase family. Monomer. Mg(2+) is required as a cofactor.

It catalyses the reaction adenosine(37) in tRNA + dimethylallyl diphosphate = N(6)-dimethylallyladenosine(37) in tRNA + diphosphate. Functionally, catalyzes the transfer of a dimethylallyl group onto the adenine at position 37 in tRNAs that read codons beginning with uridine, leading to the formation of N6-(dimethylallyl)adenosine (i(6)A). The chain is tRNA dimethylallyltransferase 1 from Trichlorobacter lovleyi (strain ATCC BAA-1151 / DSM 17278 / SZ) (Geobacter lovleyi).